Reading from the N-terminus, the 1555-residue chain is Bromodomain adjacent to zinc finger domain protein 1A (1555 aa).

A required for association with the CHRAC1/POLE3 complex region spans residues 1-128; the sequence is MPLLHRKPFV…EETVEVIRNN (128 aa). The interval 1 to 128 is required for interaction with the CHRAC1-POLE3 heterodimer. Required for interaction with the CHRAC1-POLE3 heterodimer; it reads MPLLHRKPFV…EETVEVIRNN (128 aa). A required for interaction with NCOR1 region spans residues 1 to 133; the sequence is MPLLHRKPFV…VIRNNGTRLQ (133 aa). A WAC domain is found at 22-128; the sequence is EEVFYCKVTN…EETVEVIRNN (107 aa). Residues serine 270 and serine 284 each carry the phosphoserine modification. The region spanning 422 to 488 is the DDT domain; the sequence is PEVFGDALMV…LTAIFQAMAE (67 aa). Residues 635–701 are a coiled coil; sequence IEDYVDVLRQ…EDEQRNSAAV (67 aa). 2 stretches are compositionally biased toward basic and acidic residues: residues 652-664 and 671-696; these read LKAE…REAT and RKEE…DEQR. Residues 652–751 form a disordered region; the sequence is LKAEQHRKER…KRSRRGKVGQ (100 aa). Positions 668 to 935 are interaction with SMARCA5; sequence IRRRKEEKLK…QEKSRICAQL (268 aa). The tract at residues 668 to 935 is required for interaction with SMARCA5 and formation of the CHRAC ISWI chromatin remodeling complex; the sequence is IRRRKEEKLK…QEKSRICAQL (268 aa). 2 stretches are compositionally biased toward acidic residues: residues 705–714 and 728–737; these read GEEEREDFDT and PDVVTEDEDD. Threonine 732 carries the post-translational modification Phosphothreonine. Residues 773 to 798 adopt a coiled-coil conformation; it reads SADAEEALRQEQQQKEKELLDKIQSA. Disordered stretches follow at residues 843–874 and 944–969; these read PSSF…SSLD and HFSD…CDIS. Low complexity predominate over residues 864-873; that stretch reads SFLSESTSSL. A Glycyl lysine isopeptide (Lys-Gly) (interchain with G-Cter in SUMO2) cross-link involves residue lysine 954. Phosphoserine occurs at positions 962 and 963. The PHD-type zinc-finger motif lies at 1149 to 1199; it reads NARCKICRKKGDAENMVLCDGCDRGHHTYCVRPKLKAVPDGDWFCPECRPK. A disordered region spans residues 1203–1429; sequence RRLSSRQRPS…LNRRSSGRQG (227 aa). Over residues 1214–1258 the composition is skewed to acidic residues; it reads ESDEEMEEGMEDDDDEVDDDDEEGQSEEEEYEVEQDEEDSDDDEA. A compositionally biased stretch (basic residues) spans 1263 to 1277; sequence KRGRPQVRLPIKTKG. Serine 1282 carries the phosphoserine modification. Over residues 1297–1313 the composition is skewed to polar residues; sequence SRSQQSTPKNTAKSASK. Phosphoserine is present on residues serine 1320, serine 1339, serine 1352, serine 1370, serine 1401, serine 1412, and serine 1416. The segment covering 1369 to 1386 has biased composition (polar residues); sequence HSPSFTNFRVSTSRSSRQ. The Bromo domain maps to 1429 to 1532; it reads GGVHELSAFE…AFFHIQAQKL (104 aa). Threonine 1546 carries the post-translational modification Phosphothreonine.

Belongs to the WAL family. Component of the ACF-1 ISWI chromatin remodeling complex at least composed of SMARCA1 and BAZ1A, which regulates the spacing of histone octamers on the DNA template to facilitate access to DNA. Within the ACF-1 ISWI chromatin remodeling complex interacts with SMARCA1; the interaction is direct. Component of the ACF-5 ISWI chromatin remodeling complex (also called the ACF complex) at least composed of BAZ1A and SMARCA5/SNF2H, which regulates the spacing of histone octamers on the DNA template to facilitate access to DNA. Within the ACF-5 ISWI chromatin remodeling complex interacts with SMARCA5/SNF2H; the interaction is direct. Component of the CHRAC ISWI chromatin remodeling complex at least composed of SMARCA5/SNF2H, BAZ1A/ACF1, CHRAC1 and POLE3; the complex preferentially binds DNA through the CHRAC1-POLE3 heterodimer and possesses ATP-dependent nucleosome-remodeling activity. Within the complex interacts (via N-terminus) with POLE3-CHRAC1 heterodimer; the interaction is direct and is required for the complex to preferentially bind to DNA. Within the complex interacts with SMARCA5/SNF2H; the interaction is direct and promotes the interaction with the POLE3-CHRAC1 heterodimer. Interacts with NCOR1 (via its RD1 domain); the interaction corepresses a number of NCOR1-regulated genes.

It localises to the nucleus. In terms of biological role, regulatory subunit of the ATP-dependent ACF-1 and ACF-5 ISWI chromatin remodeling complexes, which form ordered nucleosome arrays on chromatin and slide edge- and center-positioned histone octamers away from their original location on the DNA template to facilitate access to DNA during DNA-templated processes such as DNA replication, transcription, and repair. Both complexes regulate the spacing of nucleosomes along the chromatin and have the ability to slide mononucleosomes to the center of a DNA template in an ATP-dependent manner. The ACF-1 ISWI chromatin remodeling complex has a lower ATP hydrolysis rate than the ACF-5 ISWI chromatin remodeling complex. Has a role in sensing the length of DNA which flank nucleosomes, which modulates the nucleosome spacing activity of the ACF-5 ISWI chromatin remodeling complex. Involved in DNA replication and together with SMARCA5/SNF2H is required for replication of pericentric heterochromatin in S-phase. May have a role in nuclear receptor-mediated transcription repression. This is Bromodomain adjacent to zinc finger domain protein 1A (Baz1a) from Mus musculus (Mouse).